The following is a 484-amino-acid chain: Protein DETOXIFICATION 33 (484 aa).

Residues 1–16 are compositionally biased toward basic and acidic residues; sequence MGKDKTLPLLDPREPP. Positions 1 to 22 are disordered; it reads MGKDKTLPLLDPREPPELTGTK. Helical transmembrane passes span 39–59, 81–101, 122–142, 155–175, 190–210, 218–238, 267–287, 294–314, 338–358, 380–400, 409–429, and 439–459; these read LWEL…LGAL, VISG…ETLC, VILF…PPIL, AGKF…NFPI, WISG…ILYF, AITL…YILI, ALML…TGLL, VDAI…SIGF, VIVV…VVLA, IAVL…LSGV, LVAY…GLVL, and GIWG…IGII.

The protein belongs to the multi antimicrobial extrusion (MATE) (TC 2.A.66.1) family.

It localises to the membrane. The sequence is that of Protein DETOXIFICATION 33 from Arabidopsis thaliana (Mouse-ear cress).